Reading from the N-terminus, the 390-residue chain is Phosphopentomutase (390 aa).

Residues D9, D283, H288, D324, H325, and H336 each contribute to the Mn(2+) site.

It belongs to the phosphopentomutase family. Requires Mn(2+) as cofactor.

It is found in the cytoplasm. It catalyses the reaction 2-deoxy-alpha-D-ribose 1-phosphate = 2-deoxy-D-ribose 5-phosphate. The enzyme catalyses alpha-D-ribose 1-phosphate = D-ribose 5-phosphate. It functions in the pathway carbohydrate degradation; 2-deoxy-D-ribose 1-phosphate degradation; D-glyceraldehyde 3-phosphate and acetaldehyde from 2-deoxy-alpha-D-ribose 1-phosphate: step 1/2. Its function is as follows. Isomerase that catalyzes the conversion of deoxy-ribose 1-phosphate (dRib-1-P) and ribose 1-phosphate (Rib-1-P) to deoxy-ribose 5-phosphate (dRib-5-P) and ribose 5-phosphate (Rib-5-P), respectively. The polypeptide is Phosphopentomutase (Thermotoga petrophila (strain ATCC BAA-488 / DSM 13995 / JCM 10881 / RKU-1)).